The chain runs to 472 residues: DNA-cytosine methyltransferase (472 aa).

Residues 87-457 (FRFIDLFAGI…KLLEPKIKQA (371 aa)) enclose the SAM-dependent MTase C5-type domain. Residue Cys177 is part of the active site.

The protein belongs to the class I-like SAM-binding methyltransferase superfamily. C5-methyltransferase family.

The catalysed reaction is a 2'-deoxycytidine in DNA + S-adenosyl-L-methionine = a 5-methyl-2'-deoxycytidine in DNA + S-adenosyl-L-homocysteine + H(+). This methylase recognizes the double-stranded sequence 5'-CCWGG-3', methylates C-2 on both strands. The protein is DNA-cytosine methyltransferase (dcm) of Escherichia coli O157:H7.